Consider the following 146-residue polypeptide: Large ribosomal subunit protein uL13 (146 aa).

The interval 126-146 (AGPKHPHAAQQPKVYEPRPRG) is disordered.

The protein belongs to the universal ribosomal protein uL13 family. In terms of assembly, part of the 50S ribosomal subunit.

Its function is as follows. This protein is one of the early assembly proteins of the 50S ribosomal subunit, although it is not seen to bind rRNA by itself. It is important during the early stages of 50S assembly. This chain is Large ribosomal subunit protein uL13, found in Roseiflexus castenholzii (strain DSM 13941 / HLO8).